The chain runs to 317 residues: Acetyl-coenzyme A carboxylase carboxyl transferase subunit beta (317 aa).

A disordered region spans residues 1 to 28 (MANNMTDTMTKPDINNDSTSLQQNGNKA). Residues 55 to 317 (PSTKCSSCHS…LCSVPNVDVQ (263 aa)) form the CoA carboxyltransferase N-terminal domain. Positions 59, 62, 78, and 81 each coordinate Zn(2+). Residues 59-81 (CSSCHSIITNTALIFNCYVCPHC) form a C4-type zinc finger.

This sequence belongs to the AccD/PCCB family. In terms of assembly, acetyl-CoA carboxylase is a heterohexamer composed of biotin carboxyl carrier protein (AccB), biotin carboxylase (AccC) and two subunits each of ACCase subunit alpha (AccA) and ACCase subunit beta (AccD). Zn(2+) is required as a cofactor.

It localises to the cytoplasm. It carries out the reaction N(6)-carboxybiotinyl-L-lysyl-[protein] + acetyl-CoA = N(6)-biotinyl-L-lysyl-[protein] + malonyl-CoA. It participates in lipid metabolism; malonyl-CoA biosynthesis; malonyl-CoA from acetyl-CoA: step 1/1. Its function is as follows. Component of the acetyl coenzyme A carboxylase (ACC) complex. Biotin carboxylase (BC) catalyzes the carboxylation of biotin on its carrier protein (BCCP) and then the CO(2) group is transferred by the transcarboxylase to acetyl-CoA to form malonyl-CoA. The sequence is that of Acetyl-coenzyme A carboxylase carboxyl transferase subunit beta from Psychrobacter cryohalolentis (strain ATCC BAA-1226 / DSM 17306 / VKM B-2378 / K5).